Reading from the N-terminus, the 553-residue chain is Cytokine-like nuclear factor N-PAC (553 aa).

The PWWP domain occupies 8 to 66 (LGDLVWGKLGRYPPWPGKIVNPPKDLKKPRGKKCFFVKFFGTEDHAWIKVEQLKPYHLH). Composition is skewed to basic and acidic residues over residues 92–145 (KTKG…EGKK) and 162–182 (RAQDQSPRKRGRPPKDEKDLT). The interval 92-188 (KTKGKDQASS…KDLTIPESST (97 aa)) is disordered. The a.T hook DNA-binding region spans 168-180 (PRKRGRPPKDEKD). The segment at 214–217 (DPHF) is interaction with histone H3. The tract at residues 261 to 553 (GSITPTDKKI…MSAVYRAYIH (293 aa)) is dehydrogenase domain. NAD(+) contacts are provided by residues 271-285 (GFLGLGLMGSGIVSN), Thr-362, and Lys-505.

The protein belongs to the HIBADH-related family. NP60 subfamily. In terms of assembly, homotetramere. Binds to mononucleosomes.

Its subcellular location is the nucleus. The protein localises to the chromosome. Functionally, cytokine-like nuclear factor with chromatin gene reader activity involved in chromatin modification and regulation of gene expression. Acts as a nucleosome-destabilizing factor that is recruited to genes during transcriptional activation. Recognizes and binds histone H3 without a preference for specific epigenetic markers and also binds DNA. Interacts with KDM1B and promotes its histone demethylase activity by facilitating the capture of H3 tails, they form a multifunctional enzyme complex that modifies transcribed chromatin and facilitates Pol II transcription through nucleosomes. This Gallus gallus (Chicken) protein is Cytokine-like nuclear factor N-PAC (GLYR1).